The primary structure comprises 314 residues: 2,3-dihydroxyphenylpropionate/2,3-dihydroxicinnamic acid 1,2-dioxygenase 1 (314 aa).

Histidine 115 serves as the catalytic Proton donor. Histidine 179 serves as the catalytic Proton acceptor.

The protein belongs to the LigB/MhpB extradiol dioxygenase family. In terms of assembly, homotetramer. It depends on Fe(2+) as a cofactor.

It catalyses the reaction 3-(2,3-dihydroxyphenyl)propanoate + O2 = (2Z,4E)-2-hydroxy-6-oxonona-2,4-dienedioate + H(+). It carries out the reaction (2E)-3-(2,3-dihydroxyphenyl)prop-2-enoate + O2 = (2Z,4E,7E)-2-hydroxy-6-oxonona-2,4,7-trienedioate + H(+). Its pathway is aromatic compound metabolism; 3-phenylpropanoate degradation. Catalyzes the non-heme iron(II)-dependent oxidative cleavage of 2,3-dihydroxyphenylpropionic acid and 2,3-dihydroxicinnamic acid into 2-hydroxy-6-ketononadienedioate and 2-hydroxy-6-ketononatrienedioate, respectively. This Pseudomonas putida (Arthrobacter siderocapsulatus) protein is 2,3-dihydroxyphenylpropionate/2,3-dihydroxicinnamic acid 1,2-dioxygenase 1.